The primary structure comprises 185 residues: A-type ATP synthase subunit E (185 aa).

This sequence belongs to the V-ATPase E subunit family. Has multiple subunits with at least A(3), B(3), C, D, E, F, H, I and proteolipid K(x).

It is found in the cell membrane. Its function is as follows. Component of the A-type ATP synthase that produces ATP from ADP in the presence of a proton gradient across the membrane. This is A-type ATP synthase subunit E from Thermoplasma acidophilum (strain ATCC 25905 / DSM 1728 / JCM 9062 / NBRC 15155 / AMRC-C165).